The sequence spans 1413 residues: DNA-directed RNA polymerase subunit beta' (1413 aa).

The Zn(2+) site is built by Cys70, Cys72, Cys85, and Cys88. Mg(2+) contacts are provided by Asp461, Asp463, and Asp465. Positions 820, 894, 901, and 904 each coordinate Zn(2+).

Belongs to the RNA polymerase beta' chain family. As to quaternary structure, the RNAP catalytic core consists of 2 alpha, 1 beta, 1 beta' and 1 omega subunit. When a sigma factor is associated with the core the holoenzyme is formed, which can initiate transcription. Requires Mg(2+) as cofactor. Zn(2+) is required as a cofactor.

The enzyme catalyses RNA(n) + a ribonucleoside 5'-triphosphate = RNA(n+1) + diphosphate. In terms of biological role, DNA-dependent RNA polymerase catalyzes the transcription of DNA into RNA using the four ribonucleoside triphosphates as substrates. This is DNA-directed RNA polymerase subunit beta' from Cupriavidus metallidurans (strain ATCC 43123 / DSM 2839 / NBRC 102507 / CH34) (Ralstonia metallidurans).